A 642-amino-acid polypeptide reads, in one-letter code: tRNA uridine 5-carboxymethylaminomethyl modification enzyme MnmG (642 aa).

FAD is bound by residues 12 to 17 (GAGHAG), valine 124, and serine 179. Residue 272–286 (GPRYCPSIEDKITRF) participates in NAD(+) binding. Glutamine 369 serves as a coordination point for FAD.

This sequence belongs to the MnmG family. As to quaternary structure, homodimer. Heterotetramer of two MnmE and two MnmG subunits. The cofactor is FAD.

It localises to the cytoplasm. Its function is as follows. NAD-binding protein involved in the addition of a carboxymethylaminomethyl (cmnm) group at the wobble position (U34) of certain tRNAs, forming tRNA-cmnm(5)s(2)U34. This Bdellovibrio bacteriovorus (strain ATCC 15356 / DSM 50701 / NCIMB 9529 / HD100) protein is tRNA uridine 5-carboxymethylaminomethyl modification enzyme MnmG.